The chain runs to 299 residues: Bifunctional protein FolD 2 (299 aa).

The protein belongs to the tetrahydrofolate dehydrogenase/cyclohydrolase family. In terms of assembly, homodimer.

The enzyme catalyses (6R)-5,10-methylene-5,6,7,8-tetrahydrofolate + NADP(+) = (6R)-5,10-methenyltetrahydrofolate + NADPH. It carries out the reaction (6R)-5,10-methenyltetrahydrofolate + H2O = (6R)-10-formyltetrahydrofolate + H(+). It participates in one-carbon metabolism; tetrahydrofolate interconversion. Its function is as follows. Catalyzes the oxidation of 5,10-methylenetetrahydrofolate to 5,10-methenyltetrahydrofolate and then the hydrolysis of 5,10-methenyltetrahydrofolate to 10-formyltetrahydrofolate. The sequence is that of Bifunctional protein FolD 2 (FOLD2) from Arabidopsis thaliana (Mouse-ear cress).